We begin with the raw amino-acid sequence, 260 residues long: Snake venom serine protease gussurobin (260 aa).

A signal peptide spans 1-18 (MVLIRVLANLLILQLSYA). Residues 19–24 (QKSSEL) constitute a propeptide that is removed on maturation. The 227-residue stretch at 25 to 251 (IIGGDECNIN…YTEWIQSTIA (227 aa)) folds into the Peptidase S1 domain. 6 disulfide bridges follow: Cys31/Cys165, Cys52/Cys68, Cys100/Cys258, Cys144/Cys212, Cys176/Cys191, and Cys202/Cys227. Residues His67 and Asp112 each act as charge relay system in the active site. N-linked (GlcNAc...) asparagine glycosylation is found at Asn123 and Asn124. Residue Ser206 is the Charge relay system of the active site.

This sequence belongs to the peptidase S1 family. Snake venom subfamily. In terms of assembly, monomer. As to expression, expressed by the venom gland.

The protein resides in the secreted. Functionally, snake venom serine protease that may act in the hemostasis system of the prey. This Gloydius ussuriensis (Ussuri mamushi) protein is Snake venom serine protease gussurobin.